The primary structure comprises 333 residues: Dehydrodolichyl diphosphate synthase complex subunit Dhdds (333 aa).

5 residues coordinate (2E,6E)-farnesyl diphosphate: aspartate 34, glycine 35, arginine 37, arginine 38, and arginine 85. Aspartate 34 serves as a coordination point for Mg(2+). Residues arginine 38, arginine 85, arginine 205, arginine 211, and serine 213 each coordinate isopentenyl diphosphate.

The protein belongs to the UPP synthase family. The active dehydrodolichyl diphosphate synthase complex is a heterotetramer composed of a dimer of heterodimer of DHDDS and NUS1. Interacts with NPC2. Requires Mg(2+) as cofactor.

The protein localises to the endoplasmic reticulum membrane. The catalysed reaction is n isopentenyl diphosphate + (2E,6E)-farnesyl diphosphate = a di-trans,poly-cis-polyprenyl diphosphate + n diphosphate. It functions in the pathway protein modification; protein glycosylation. The protein operates within lipid metabolism. Functionally, with NUS1, forms the dehydrodolichyl diphosphate synthase (DDS) complex, an essential component of the dolichol monophosphate (Dol-P) biosynthetic machinery. Both subunits contribute to enzymatic activity, i.e. condensation of multiple copies of isopentenyl pyrophosphate (IPP) to farnesyl pyrophosphate (FPP) to produce dehydrodolichyl diphosphate (Dedol-PP), a precursor of dolichol phosphate which is utilized as a sugar carrier in protein glycosylation in the endoplasmic reticulum (ER). Synthesizes long-chain polyprenols, mostly of C95 and C100 chain length. Regulates the glycosylation and stability of nascent NPC2, thereby promoting trafficking of LDL-derived cholesterol. This is Dehydrodolichyl diphosphate synthase complex subunit Dhdds from Mus musculus (Mouse).